The chain runs to 394 residues: Elongation factor Tu (394 aa).

The region spanning 10-204 (KPHVNIGTIG…AVDSYIPQPV (195 aa)) is the tr-type G domain. The G1 stretch occupies residues 19 to 26 (GHVDHGKT). 19 to 26 (GHVDHGKT) lines the GTP pocket. Thr-26 serves as a coordination point for Mg(2+). The segment at 60–64 (GITIS) is G2. A G3 region spans residues 81–84 (DCPG). GTP-binding positions include 81–85 (DCPGH) and 136–139 (NKVD). The interval 136-139 (NKVD) is G4. The G5 stretch occupies residues 174–176 (SAL).

Belongs to the TRAFAC class translation factor GTPase superfamily. Classic translation factor GTPase family. EF-Tu/EF-1A subfamily. As to quaternary structure, monomer.

The protein resides in the cytoplasm. It catalyses the reaction GTP + H2O = GDP + phosphate + H(+). In terms of biological role, GTP hydrolase that promotes the GTP-dependent binding of aminoacyl-tRNA to the A-site of ribosomes during protein biosynthesis. This is Elongation factor Tu from Rickettsia felis (strain ATCC VR-1525 / URRWXCal2) (Rickettsia azadi).